A 429-amino-acid chain; its full sequence is Enolase (429 aa).

Residue Gln167 coordinates (2R)-2-phosphoglycerate. Glu209 serves as the catalytic Proton donor. 3 residues coordinate Mg(2+): Asp246, Glu289, and Asp316. Positions 341, 370, 371, and 392 each coordinate (2R)-2-phosphoglycerate. Catalysis depends on Lys341, which acts as the Proton acceptor.

Belongs to the enolase family. Component of the RNA degradosome, a multiprotein complex involved in RNA processing and mRNA degradation. Requires Mg(2+) as cofactor.

The protein resides in the cytoplasm. Its subcellular location is the secreted. It localises to the cell surface. The enzyme catalyses (2R)-2-phosphoglycerate = phosphoenolpyruvate + H2O. The protein operates within carbohydrate degradation; glycolysis; pyruvate from D-glyceraldehyde 3-phosphate: step 4/5. Catalyzes the reversible conversion of 2-phosphoglycerate (2-PG) into phosphoenolpyruvate (PEP). It is essential for the degradation of carbohydrates via glycolysis. The protein is Enolase of Ectopseudomonas mendocina (strain ymp) (Pseudomonas mendocina).